The following is a 310-amino-acid chain: N-acetylmuramic acid 6-phosphate etherase (310 aa).

The 164-residue stretch at 64–227 (ITSRLKSNGR…STSVMIKLGK (164 aa)) folds into the SIS domain. Catalysis depends on Glu92, which acts as the Proton donor. Glu123 is a catalytic residue.

Belongs to the GCKR-like family. MurNAc-6-P etherase subfamily. In terms of assembly, homodimer.

The catalysed reaction is N-acetyl-D-muramate 6-phosphate + H2O = N-acetyl-D-glucosamine 6-phosphate + (R)-lactate. The protein operates within amino-sugar metabolism; N-acetylmuramate degradation. Specifically catalyzes the cleavage of the D-lactyl ether substituent of MurNAc 6-phosphate, producing GlcNAc 6-phosphate and D-lactate. The chain is N-acetylmuramic acid 6-phosphate etherase from Prochlorococcus marinus (strain NATL2A).